Reading from the N-terminus, the 367-residue chain is DNA replication and repair protein RecF (367 aa).

30 to 37 (GANGSGKT) serves as a coordination point for ATP.

Belongs to the RecF family.

Its subcellular location is the cytoplasm. In terms of biological role, the RecF protein is involved in DNA metabolism; it is required for DNA replication and normal SOS inducibility. RecF binds preferentially to single-stranded, linear DNA. It also seems to bind ATP. The chain is DNA replication and repair protein RecF from Pseudomonas syringae pv. tomato (strain ATCC BAA-871 / DC3000).